Reading from the N-terminus, the 238-residue chain is Probable transcriptional regulatory protein YeeN (238 aa).

The protein belongs to the TACO1 family. YeeN subfamily.

Its subcellular location is the cytoplasm. This is Probable transcriptional regulatory protein YeeN from Salmonella typhimurium (strain LT2 / SGSC1412 / ATCC 700720).